Reading from the N-terminus, the 384-residue chain is tRNA(Met) cytidine acetate ligase (384 aa).

ATP contacts are provided by residues 7-20 (VAEY…HEFL), Gly101, Asn153, and Arg178.

It belongs to the TmcAL family.

Its subcellular location is the cytoplasm. The catalysed reaction is cytidine(34) in elongator tRNA(Met) + acetate + ATP = N(4)-acetylcytidine(34) in elongator tRNA(Met) + AMP + diphosphate. Functionally, catalyzes the formation of N(4)-acetylcytidine (ac(4)C) at the wobble position of elongator tRNA(Met), using acetate and ATP as substrates. First activates an acetate ion to form acetyladenylate (Ac-AMP) and then transfers the acetyl group to tRNA to form ac(4)C34. The sequence is that of tRNA(Met) cytidine acetate ligase from Lactobacillus delbrueckii subsp. bulgaricus (strain ATCC 11842 / DSM 20081 / BCRC 10696 / JCM 1002 / NBRC 13953 / NCIMB 11778 / NCTC 12712 / WDCM 00102 / Lb 14).